Reading from the N-terminus, the 128-residue chain is Iron-sulfur cluster insertion protein ErpA (128 aa).

The iron-sulfur cluster site is built by cysteine 56, cysteine 120, and cysteine 122.

This sequence belongs to the HesB/IscA family. As to quaternary structure, homodimer. Iron-sulfur cluster serves as cofactor.

Its function is as follows. Required for insertion of 4Fe-4S clusters for at least IspG. The sequence is that of Iron-sulfur cluster insertion protein ErpA from Xylella fastidiosa (strain M12).